The following is a 628-amino-acid chain: Protein SDS23 (628 aa).

The interval 1 to 126 (MVNPPQPRQM…NKSSSQSIAP (126 aa)) is disordered. Positions 15–24 (RLSTSTSSGP) are enriched in polar residues. 2 stretches are compositionally biased toward low complexity: residues 40 to 71 (QLQH…PGST) and 109 to 123 (SRHA…SSQS). CBS domains lie at 258-319 (LHPK…RFPS) and 334-392 (GSSN…SHLL). Positions 551–609 (GRRTDPQAARNQRRRSSTSTTRSSIDSALSAEGILPSGSAIIGSSNAANTGRRGSVEVS) are disordered. Low complexity predominate over residues 587–599 (SGSAIIGSSNAAN).

Belongs to the SDS23 family.

Its subcellular location is the cytoplasm. The protein localises to the nucleus. Involved in DNA replication and cell separation. This Candida albicans (strain SC5314 / ATCC MYA-2876) (Yeast) protein is Protein SDS23 (SDS24).